The following is a 1069-amino-acid chain: Epstein-Barr nuclear antigen 6 (1069 aa).

5 disordered regions span residues 1-75 (MESF…RIRR), 353-708 (MLAT…PCQS), 733-776 (SSMS…LYPG), 884-932 (REPR…PPRL), and 1008-1069 (PLDI…SELD). Over residues 50-67 (PDSRDQQSRGQRRGDENR) the composition is skewed to basic and acidic residues. 2 stretches are compositionally biased toward acidic residues: residues 381–391 (VELESSDDELP) and 507–524 (YDDD…EEET). The span at 543–561 (STGSAMSSSHTDPSVTQPS) shows a compositional bias: polar residues. Low complexity predominate over residues 689–708 (QQEPSSQQQPATQSTPPCQS). Residues 742-751 (SHEEQPRYED) are compositionally biased toward basic and acidic residues. Residues 1032-1048 (SQATSEAQEILSDNSEI) show a composition bias toward polar residues.

Belongs to the herpesviridae EBNA-6 family. As to quaternary structure, interacts with host CTPB1; this interaction leads to gene repression, but also seems to interfere with the repressive function of CtBP pre-bound to DNA, leading to EBNA6 mediated up-regulation of many host genes. Interacts with host MYC; this interaction enhances MYC stability. Interacts (via N-terminus) with host RBPJ. Interacts (via N-terminus) with host histone H2AX; this interaction facilitates H2AX proteasomal degradation. Interacts with host TP73; this interaction inhibits TP73-mediated apoptotic pathway. Interacts (via N-terminus) with host PIM1; this interaction upregulates and stabilizes PIM1 and induces cell proliferation by inhibiting the growth suppressive properties of p21.

The protein localises to the host nucleus. It localises to the host nucleus matrix. Its function is as follows. Plays an essential role for the activation and immortalization of human B-cells. Represses transcription of viral promoters TP1 and Cp through interaction with host RBPJ, and inhibits EBNA2-mediated activation of these promoters. Targets host chromatin through interactions with host transcription factors, especially RBPJ and IRF4. Alternatively, EBNA6 also regulates the transcription of the EBV oncogene LMP1 in a cell cycle-dependent manner. Modulates the activity of several host proteins involved in cell cycle regulation including host cyclin A, MYC, RB, p21 and p27 mainly through binding to the host SCF(SKP2) complex. Inhibits the promoter of host H2AX and targets H2AX to proteasomal degradation in order to promote latency and cell proliferation. Upregulates host PIM1 expression and stabilization. Potentiates PIM1 to promote cell proliferation by inhibiting the growth suppressive properties of p21. This Epstein-Barr virus (strain AG876) (HHV-4) protein is Epstein-Barr nuclear antigen 6 (EBNA6).